A 31-amino-acid chain; its full sequence is Cyclotide psybry C (31 aa).

A cross-link (cyclopeptide (Gly-Asn)) is located at residues 1-31; it reads GFNPCGETCQIDQTCHAPGCTCSIANICVRN. 3 disulfide bridges follow: Cys5–Cys20, Cys9–Cys22, and Cys15–Cys28.

Post-translationally, this is a cyclic peptide.

Probably participates in a plant defense mechanism. The sequence is that of Cyclotide psybry C from Psychotria brachyceras.